The sequence spans 209 residues: ATP phosphoribosyltransferase (209 aa).

This sequence belongs to the ATP phosphoribosyltransferase family. Short subfamily. As to quaternary structure, heteromultimer composed of HisG and HisZ subunits.

The protein resides in the cytoplasm. It carries out the reaction 1-(5-phospho-beta-D-ribosyl)-ATP + diphosphate = 5-phospho-alpha-D-ribose 1-diphosphate + ATP. It participates in amino-acid biosynthesis; L-histidine biosynthesis; L-histidine from 5-phospho-alpha-D-ribose 1-diphosphate: step 1/9. Functionally, catalyzes the condensation of ATP and 5-phosphoribose 1-diphosphate to form N'-(5'-phosphoribosyl)-ATP (PR-ATP). Has a crucial role in the pathway because the rate of histidine biosynthesis seems to be controlled primarily by regulation of HisG enzymatic activity. In Caldicellulosiruptor bescii (strain ATCC BAA-1888 / DSM 6725 / KCTC 15123 / Z-1320) (Anaerocellum thermophilum), this protein is ATP phosphoribosyltransferase.